The chain runs to 916 residues: Pertactin autotransporter (916 aa).

Positions 1 to 37 are cleaved as a signal peptide; the sequence is MNMSLSRIVKAAPLRRTTLAMALGALGALGAAPAAHA. The Cell attachment site; involved in adhesion to various eukaryotic cell lines motif lies at 263 to 265; that stretch reads RGD. 3 repeat units span residues 269–273, 274–278, and 279–283. The tract at residues 269–288 is 4 X 5 AA tandem repeats of G-G-A-V-P; it reads GGAVPGGAVPGGAVPGGFGP. Residues 284–288 form a 4; approximate repeat; that stretch reads GGFGP. The disordered stretch occupies residues 564 to 613; that stretch reads SLVGAKAPPAPKPAPQPGPQPGPQPPQPPQPPQRQPEAPAPQPPAGRELS. The segment covering 571-607 has biased composition (pro residues); that stretch reads PPAPKPAPQPGPQPGPQPPQPPQPPQRQPEAPAPQPP. The interval 578–606 is 6 X 3 AA repeats of P-Q-P; the sequence is PQPGPQPGPQPPQPPQPPQRQPEAPAPQP. Residues 648-916 enclose the Autotransporter domain; that stretch reads LNPDAGGAWG…TFHAGYRYSW (269 aa). The Cell attachment site signature appears at 706-708; it reads RGD.

As to quaternary structure, monomer.

It localises to the periplasm. The protein resides in the secreted. It is found in the cell surface. Its subcellular location is the cell outer membrane. In terms of biological role, agglutinogen that binds to eukaryotic cells; a process mediated by the R-G-D sequence. Pertactin may have a role in bacterial adhesion, and thus play a role in virulence. May contribute to the disease state of whooping cough. The polypeptide is Pertactin autotransporter (prn) (Bordetella bronchiseptica (strain ATCC BAA-588 / NCTC 13252 / RB50) (Alcaligenes bronchisepticus)).